The primary structure comprises 503 residues: Probable cytosol aminopeptidase (503 aa).

Mn(2+)-binding residues include K274 and D279. The active site involves K286. Mn(2+)-binding residues include D297, D356, and E358. The active site involves R360.

Belongs to the peptidase M17 family. Mn(2+) serves as cofactor.

The protein resides in the cytoplasm. The catalysed reaction is Release of an N-terminal amino acid, Xaa-|-Yaa-, in which Xaa is preferably Leu, but may be other amino acids including Pro although not Arg or Lys, and Yaa may be Pro. Amino acid amides and methyl esters are also readily hydrolyzed, but rates on arylamides are exceedingly low.. The enzyme catalyses Release of an N-terminal amino acid, preferentially leucine, but not glutamic or aspartic acids.. Its function is as follows. Presumably involved in the processing and regular turnover of intracellular proteins. Catalyzes the removal of unsubstituted N-terminal amino acids from various peptides. This is Probable cytosol aminopeptidase from Burkholderia orbicola (strain MC0-3).